Here is a 349-residue protein sequence, read N- to C-terminus: S-adenosylmethionine:tRNA ribosyltransferase-isomerase (349 aa).

Belongs to the QueA family. Monomer.

It localises to the cytoplasm. The catalysed reaction is 7-aminomethyl-7-carbaguanosine(34) in tRNA + S-adenosyl-L-methionine = epoxyqueuosine(34) in tRNA + adenine + L-methionine + 2 H(+). The protein operates within tRNA modification; tRNA-queuosine biosynthesis. Transfers and isomerizes the ribose moiety from AdoMet to the 7-aminomethyl group of 7-deazaguanine (preQ1-tRNA) to give epoxyqueuosine (oQ-tRNA). The sequence is that of S-adenosylmethionine:tRNA ribosyltransferase-isomerase from Pseudomonas putida (strain GB-1).